Consider the following 174-residue polypeptide: MIDSDGFRANVGIIICNRYGQVMWARRFGQHSWQFPQGGVDDGESAEEAMYRELYEEVGLRPEHVTVLTSTRSWLRYRLPKRLVRQDSKPVCIGQKQKWFLLQLKSQDSAINLSSSGHPEFDDWRWVSYWYPVRQVVSFKRDVYRKVMKEFAVTALSFQTQEIPKKRVRQKTTG.

The region spanning 6 to 149 (GFRANVGIII…KRDVYRKVMK (144 aa)) is the Nudix hydrolase domain. The short motif at 38–59 (GGVDDGESAEEAMYRELYEEVG) is the Nudix box element.

This sequence belongs to the Nudix hydrolase family. RppH subfamily. A divalent metal cation serves as cofactor.

Its function is as follows. Accelerates the degradation of transcripts by removing pyrophosphate from the 5'-end of triphosphorylated RNA, leading to a more labile monophosphorylated state that can stimulate subsequent ribonuclease cleavage. The protein is RNA pyrophosphohydrolase of Shewanella oneidensis (strain ATCC 700550 / JCM 31522 / CIP 106686 / LMG 19005 / NCIMB 14063 / MR-1).